A 421-amino-acid polypeptide reads, in one-letter code: Serine hydroxymethyltransferase (421 aa).

Residues Leu121 and Gly125–Leu127 each bind (6S)-5,6,7,8-tetrahydrofolate. Lys229 is subject to N6-(pyridoxal phosphate)lysine.

It belongs to the SHMT family. In terms of assembly, homodimer. Pyridoxal 5'-phosphate serves as cofactor.

The protein localises to the cytoplasm. The enzyme catalyses (6R)-5,10-methylene-5,6,7,8-tetrahydrofolate + glycine + H2O = (6S)-5,6,7,8-tetrahydrofolate + L-serine. The protein operates within one-carbon metabolism; tetrahydrofolate interconversion. It functions in the pathway amino-acid biosynthesis; glycine biosynthesis; glycine from L-serine: step 1/1. Catalyzes the reversible interconversion of serine and glycine with tetrahydrofolate (THF) serving as the one-carbon carrier. This reaction serves as the major source of one-carbon groups required for the biosynthesis of purines, thymidylate, methionine, and other important biomolecules. Also exhibits THF-independent aldolase activity toward beta-hydroxyamino acids, producing glycine and aldehydes, via a retro-aldol mechanism. This chain is Serine hydroxymethyltransferase, found in Actinobacillus pleuropneumoniae serotype 5b (strain L20).